Reading from the N-terminus, the 313-residue chain is Putative stilbene synthase 2 (313 aa).

C88 is a catalytic residue. Substrate is bound by residues L191 and 229–231 (GGP).

It belongs to the thiolase-like superfamily. Chalcone/stilbene synthases family. As to quaternary structure, homodimer.

It is found in the cytoplasm. The catalysed reaction is 4-coumaroyl-CoA + 3 malonyl-CoA + 3 H(+) = trans-resveratrol + 4 CO2 + 4 CoA. It participates in phytoalexin biosynthesis; 3,4',5-trihydroxystilbene biosynthesis; 3,4',5-trihydroxystilbene from trans-4-coumarate: step 2/2. The chain is Putative stilbene synthase 2 from Arachis hypogaea (Peanut).